Here is a 248-residue protein sequence, read N- to C-terminus: ATP synthase subunit a, chloroplastic (248 aa).

5 helical membrane-spanning segments follow: residues 38 to 58 (QVLI…AIAV), 96 to 116 (VPFI…GALL), 135 to 155 (INTT…AGLT), 200 to 220 (LVVV…VMFL), and 221 to 241 (GLFT…AYIG).

This sequence belongs to the ATPase A chain family. F-type ATPases have 2 components, CF(1) - the catalytic core - and CF(0) - the membrane proton channel. CF(1) has five subunits: alpha(3), beta(3), gamma(1), delta(1), epsilon(1). CF(0) has four main subunits: a, b, b' and c.

Its subcellular location is the plastid. The protein resides in the chloroplast thylakoid membrane. In terms of biological role, key component of the proton channel; it plays a direct role in the translocation of protons across the membrane. The protein is ATP synthase subunit a, chloroplastic of Nymphaea alba (White water-lily).